The following is a 336-amino-acid chain: N-acetyl-gamma-glutamyl-phosphate reductase (336 aa).

Cysteine 148 is a catalytic residue.

It belongs to the NAGSA dehydrogenase family. Type 1 subfamily.

Its subcellular location is the cytoplasm. It catalyses the reaction N-acetyl-L-glutamate 5-semialdehyde + phosphate + NADP(+) = N-acetyl-L-glutamyl 5-phosphate + NADPH + H(+). The protein operates within amino-acid biosynthesis; L-arginine biosynthesis; N(2)-acetyl-L-ornithine from L-glutamate: step 3/4. Its function is as follows. Catalyzes the NADPH-dependent reduction of N-acetyl-5-glutamyl phosphate to yield N-acetyl-L-glutamate 5-semialdehyde. In Campylobacter curvus (strain 525.92), this protein is N-acetyl-gamma-glutamyl-phosphate reductase.